Consider the following 312-residue polypeptide: tRNA-cytidine(32) 2-sulfurtransferase (312 aa).

A PP-loop motif motif is present at residues Ser39–Ser44. The [4Fe-4S] cluster site is built by Cys114, Cys117, and Cys205.

The protein belongs to the TtcA family. Homodimer. Mg(2+) is required as a cofactor. It depends on [4Fe-4S] cluster as a cofactor.

The protein localises to the cytoplasm. The enzyme catalyses cytidine(32) in tRNA + S-sulfanyl-L-cysteinyl-[cysteine desulfurase] + AH2 + ATP = 2-thiocytidine(32) in tRNA + L-cysteinyl-[cysteine desulfurase] + A + AMP + diphosphate + H(+). Its pathway is tRNA modification. Functionally, catalyzes the ATP-dependent 2-thiolation of cytidine in position 32 of tRNA, to form 2-thiocytidine (s(2)C32). The sulfur atoms are provided by the cysteine/cysteine desulfurase (IscS) system. The chain is tRNA-cytidine(32) 2-sulfurtransferase from Cupriavidus pinatubonensis (strain JMP 134 / LMG 1197) (Cupriavidus necator (strain JMP 134)).